Consider the following 186-residue polypeptide: GTP-dependent dephospho-CoA kinase (186 aa).

D43, I44, V45, D62, E120, and D143 together coordinate GTP.

The protein belongs to the GTP-dependent DPCK family.

The enzyme catalyses 3'-dephospho-CoA + GTP = GDP + CoA + H(+). Its pathway is cofactor biosynthesis; coenzyme A biosynthesis. Its function is as follows. Catalyzes the GTP-dependent phosphorylation of the 3'-hydroxyl group of dephosphocoenzyme A to form coenzyme A (CoA). In Haloquadratum walsbyi (strain DSM 16790 / HBSQ001), this protein is GTP-dependent dephospho-CoA kinase.